Consider the following 861-residue polypeptide: Isoleucine--tRNA ligase (861 aa).

The 'HIGH' region signature appears at 57 to 67; the sequence is PYANGNIHVGH. L-isoleucyl-5'-AMP is bound at residue glutamate 549. A 'KMSKS' region motif is present at residues 590–594; it reads KMSKS. Lysine 593 contributes to the ATP binding site.

It belongs to the class-I aminoacyl-tRNA synthetase family. IleS type 1 subfamily. As to quaternary structure, monomer.

Its subcellular location is the cytoplasm. It catalyses the reaction tRNA(Ile) + L-isoleucine + ATP = L-isoleucyl-tRNA(Ile) + AMP + diphosphate. Functionally, catalyzes the attachment of isoleucine to tRNA(Ile). As IleRS can inadvertently accommodate and process structurally similar amino acids such as valine, to avoid such errors it has two additional distinct tRNA(Ile)-dependent editing activities. One activity is designated as 'pretransfer' editing and involves the hydrolysis of activated Val-AMP. The other activity is designated 'posttransfer' editing and involves deacylation of mischarged Val-tRNA(Ile). In Mycoplasma pneumoniae (strain ATCC 29342 / M129 / Subtype 1) (Mycoplasmoides pneumoniae), this protein is Isoleucine--tRNA ligase.